The sequence spans 201 residues: ATP-dependent Clp protease proteolytic subunit (201 aa).

The Nucleophile role is filled by Ser-103. His-128 is a catalytic residue.

The protein belongs to the peptidase S14 family. In terms of assembly, fourteen ClpP subunits assemble into 2 heptameric rings which stack back to back to give a disk-like structure with a central cavity, resembling the structure of eukaryotic proteasomes.

Its subcellular location is the cytoplasm. The enzyme catalyses Hydrolysis of proteins to small peptides in the presence of ATP and magnesium. alpha-casein is the usual test substrate. In the absence of ATP, only oligopeptides shorter than five residues are hydrolyzed (such as succinyl-Leu-Tyr-|-NHMec, and Leu-Tyr-Leu-|-Tyr-Trp, in which cleavage of the -Tyr-|-Leu- and -Tyr-|-Trp bonds also occurs).. Functionally, cleaves peptides in various proteins in a process that requires ATP hydrolysis. Has a chymotrypsin-like activity. Plays a major role in the degradation of misfolded proteins. This chain is ATP-dependent Clp protease proteolytic subunit, found in Bordetella avium (strain 197N).